We begin with the raw amino-acid sequence, 95 residues long: Co-chaperonin GroES (95 aa).

Belongs to the GroES chaperonin family. As to quaternary structure, heptamer of 7 subunits arranged in a ring. Interacts with the chaperonin GroEL.

The protein resides in the cytoplasm. Together with the chaperonin GroEL, plays an essential role in assisting protein folding. The GroEL-GroES system forms a nano-cage that allows encapsulation of the non-native substrate proteins and provides a physical environment optimized to promote and accelerate protein folding. GroES binds to the apical surface of the GroEL ring, thereby capping the opening of the GroEL channel. This Beijerinckia indica subsp. indica (strain ATCC 9039 / DSM 1715 / NCIMB 8712) protein is Co-chaperonin GroES.